The chain runs to 370 residues: MSQDYYQVLGVSKTASQADIKKAYLKLAKQYHPDTTNANDAEKKFKEINAAYDVLKDEQKRAAYDRFGHDAFQSQQARGGGNNGSFHPDINDIFGDFFSDFMGSGRRKQTSSKIRGSDLKYDLTIKLEEAFHGIEKNISFSSEVKCDTCHGTGSEKGETITTCDACGGVGATRIQQGFFTLEQTCHKCQGNGQIIKNPCKKCHGMGRYHKQRNLSINIPAGVENGTRIRHTGEGEAGIRGGNNGDLYVDIAIKPHDIYKVDGANLHCKLPISFVHAALGGEIEVPVIEGGKVKLTIPAGTQNGDQLRLRSKGMSKVRSTIRGDMLTHIHVEVPKNLSKKQRELLEEFKKESINEKENDSSFFNKMKSMWS.

Residues 4-68 (DYYQVLGVSK…QKRAAYDRFG (65 aa)) form the J domain. The segment at 133–211 (GIEKNISFSS…CHGMGRYHKQ (79 aa)) adopts a CR-type zinc-finger fold. The Zn(2+) site is built by C146, C149, C163, C166, C185, C188, C199, and C202. CXXCXGXG motif repeat units lie at residues 146-153 (CDTCHGTG), 163-170 (CDACGGVG), 185-192 (CHKCQGNG), and 199-206 (CKKCHGMG).

The protein belongs to the DnaJ family. Homodimer. Requires Zn(2+) as cofactor.

Its subcellular location is the cytoplasm. Functionally, participates actively in the response to hyperosmotic and heat shock by preventing the aggregation of stress-denatured proteins and by disaggregating proteins, also in an autonomous, DnaK-independent fashion. Unfolded proteins bind initially to DnaJ; upon interaction with the DnaJ-bound protein, DnaK hydrolyzes its bound ATP, resulting in the formation of a stable complex. GrpE releases ADP from DnaK; ATP binding to DnaK triggers the release of the substrate protein, thus completing the reaction cycle. Several rounds of ATP-dependent interactions between DnaJ, DnaK and GrpE are required for fully efficient folding. Also involved, together with DnaK and GrpE, in the DNA replication of plasmids through activation of initiation proteins. The protein is Chaperone protein DnaJ of Rickettsia prowazekii (strain Madrid E).